The sequence spans 448 residues: Probable glycine dehydrogenase (decarboxylating) subunit 1 (448 aa).

It belongs to the GcvP family. N-terminal subunit subfamily. In terms of assembly, the glycine cleavage system is composed of four proteins: P, T, L and H. In this organism, the P 'protein' is a heterodimer of two subunits.

It catalyses the reaction N(6)-[(R)-lipoyl]-L-lysyl-[glycine-cleavage complex H protein] + glycine + H(+) = N(6)-[(R)-S(8)-aminomethyldihydrolipoyl]-L-lysyl-[glycine-cleavage complex H protein] + CO2. In terms of biological role, the glycine cleavage system catalyzes the degradation of glycine. The P protein binds the alpha-amino group of glycine through its pyridoxal phosphate cofactor; CO(2) is released and the remaining methylamine moiety is then transferred to the lipoamide cofactor of the H protein. The protein is Probable glycine dehydrogenase (decarboxylating) subunit 1 of Exiguobacterium sibiricum (strain DSM 17290 / CCUG 55495 / CIP 109462 / JCM 13490 / 255-15).